The following is a 148-amino-acid chain: Single-stranded DNA-binding protein 2 (148 aa).

The SSB domain maps to 4–109; sequence INSVIIAGNL…IKARRIQFLN (106 aa).

In terms of assembly, homotetramer.

This chain is Single-stranded DNA-binding protein 2 (ssb2), found in Chlorobaculum tepidum (strain ATCC 49652 / DSM 12025 / NBRC 103806 / TLS) (Chlorobium tepidum).